A 336-amino-acid chain; its full sequence is Holliday junction branch migration complex subunit RuvB (336 aa).

A large ATPase domain (RuvB-L) region spans residues 4–184 (SDRLISSQSI…FGIVQRLEYY (181 aa)). ATP is bound by residues I23, R24, G65, K68, T69, T70, 131–133 (EDY), R174, Y184, and R221. T69 is a Mg(2+) binding site. A small ATPAse domain (RuvB-S) region spans residues 185–255 (SVDSLTKIVA…MAQQALEMLE (71 aa)). The head domain (RuvB-H) stretch occupies residues 258-336 (QHGFDLMDRK…HFGFSAIEQE (79 aa)). Residues R313 and R318 each contribute to the DNA site.

This sequence belongs to the RuvB family. As to quaternary structure, homohexamer. Forms an RuvA(8)-RuvB(12)-Holliday junction (HJ) complex. HJ DNA is sandwiched between 2 RuvA tetramers; dsDNA enters through RuvA and exits via RuvB. An RuvB hexamer assembles on each DNA strand where it exits the tetramer. Each RuvB hexamer is contacted by two RuvA subunits (via domain III) on 2 adjacent RuvB subunits; this complex drives branch migration. In the full resolvosome a probable DNA-RuvA(4)-RuvB(12)-RuvC(2) complex forms which resolves the HJ.

It is found in the cytoplasm. The enzyme catalyses ATP + H2O = ADP + phosphate + H(+). The RuvA-RuvB-RuvC complex processes Holliday junction (HJ) DNA during genetic recombination and DNA repair, while the RuvA-RuvB complex plays an important role in the rescue of blocked DNA replication forks via replication fork reversal (RFR). RuvA specifically binds to HJ cruciform DNA, conferring on it an open structure. The RuvB hexamer acts as an ATP-dependent pump, pulling dsDNA into and through the RuvAB complex. RuvB forms 2 homohexamers on either side of HJ DNA bound by 1 or 2 RuvA tetramers; 4 subunits per hexamer contact DNA at a time. Coordinated motions by a converter formed by DNA-disengaged RuvB subunits stimulates ATP hydrolysis and nucleotide exchange. Immobilization of the converter enables RuvB to convert the ATP-contained energy into a lever motion, pulling 2 nucleotides of DNA out of the RuvA tetramer per ATP hydrolyzed, thus driving DNA branch migration. The RuvB motors rotate together with the DNA substrate, which together with the progressing nucleotide cycle form the mechanistic basis for DNA recombination by continuous HJ branch migration. Branch migration allows RuvC to scan DNA until it finds its consensus sequence, where it cleaves and resolves cruciform DNA. The sequence is that of Holliday junction branch migration complex subunit RuvB from Legionella pneumophila (strain Paris).